The sequence spans 164 residues: Vasopressin-neurophysin 2-copeptin (164 aa).

An N-terminal signal peptide occupies residues 1–19 (MPDTMLPACFLGLLAFSSA). A disulfide bridge connects residues cysteine 20 and cysteine 25. Glycine 28 carries the post-translational modification Glycine amide. Disulfide bonds link cysteine 41/cysteine 85, cysteine 44/cysteine 58, cysteine 52/cysteine 75, cysteine 59/cysteine 65, cysteine 92/cysteine 104, cysteine 98/cysteine 116, and cysteine 105/cysteine 110. An N-linked (GlcNAc...) asparagine glycan is attached at asparagine 131.

The protein belongs to the vasopressin/oxytocin family. As to quaternary structure, interacts with vasopressin receptors V1bR/AVPR1B (Ki=85 pM), V1aR/AVPR1A (Ki=0.6 nM) and V2R/AVPR2 (Ki=4.9 nM). Interacts with oxytocin receptor (OXTR) (Ki=110 nM). (Microbial infection) May interact with SARS coronavirus-2/SARS-CoV-2; they may form a complex with secreted ACE2.

The protein resides in the secreted. Functionally, specifically binds vasopressin. Its function is as follows. Has a direct antidiuretic action on the kidney, it also causes vasoconstriction of the peripheral vessels. Acts by binding to vasopressin receptors (V1bR/AVPR1B, V1aR/AVPR1A, and V2R/AVPR2). This chain is Vasopressin-neurophysin 2-copeptin (AVP), found in Homo sapiens (Human).